The chain runs to 331 residues: Ketol-acid reductoisomerase (NADP(+)) (331 aa).

Residues 2 to 182 (ARLYYDADAN…GGTRAGILET (181 aa)) enclose the KARI N-terminal Rossmann domain. Residues 25–28 (YGSQ), Ser-51, Ser-53, and 83–86 (DEVQ) each bind NADP(+). His-108 is a catalytic residue. Gly-134 provides a ligand contact to NADP(+). The KARI C-terminal knotted domain maps to 183-328 (TFREETETDL…KDLRAMFSWT (146 aa)). Mg(2+)-binding residues include Asp-191, Glu-195, Glu-227, and Glu-231. Ser-252 is a substrate binding site.

The protein belongs to the ketol-acid reductoisomerase family. It depends on Mg(2+) as a cofactor.

The enzyme catalyses (2R)-2,3-dihydroxy-3-methylbutanoate + NADP(+) = (2S)-2-acetolactate + NADPH + H(+). The catalysed reaction is (2R,3R)-2,3-dihydroxy-3-methylpentanoate + NADP(+) = (S)-2-ethyl-2-hydroxy-3-oxobutanoate + NADPH + H(+). Its pathway is amino-acid biosynthesis; L-isoleucine biosynthesis; L-isoleucine from 2-oxobutanoate: step 2/4. It participates in amino-acid biosynthesis; L-valine biosynthesis; L-valine from pyruvate: step 2/4. Involved in the biosynthesis of branched-chain amino acids (BCAA). Catalyzes an alkyl-migration followed by a ketol-acid reduction of (S)-2-acetolactate (S2AL) to yield (R)-2,3-dihydroxy-isovalerate. In the isomerase reaction, S2AL is rearranged via a Mg-dependent methyl migration to produce 3-hydroxy-3-methyl-2-ketobutyrate (HMKB). In the reductase reaction, this 2-ketoacid undergoes a metal-dependent reduction by NADPH to yield (R)-2,3-dihydroxy-isovalerate. This chain is Ketol-acid reductoisomerase (NADP(+)), found in Acaryochloris marina (strain MBIC 11017).